A 462-amino-acid polypeptide reads, in one-letter code: tRNA modification GTPase MnmE (462 aa).

Positions 23, 86, and 125 each coordinate (6S)-5-formyl-5,6,7,8-tetrahydrofolate. Positions 221 to 384 (GIPVAIVGEP…LKNQLLSFVN (164 aa)) constitute a TrmE-type G domain. Residue Asn-231 coordinates K(+). GTP is bound by residues 231-236 (NVGKST), 250-256 (SEIAGTT), and 275-278 (DTAG). Position 235 (Ser-235) interacts with Mg(2+). Residues Ser-250, Ile-252, and Thr-255 each coordinate K(+). Thr-256 is a Mg(2+) binding site. Lys-462 contacts (6S)-5-formyl-5,6,7,8-tetrahydrofolate.

It belongs to the TRAFAC class TrmE-Era-EngA-EngB-Septin-like GTPase superfamily. TrmE GTPase family. Homodimer. Heterotetramer of two MnmE and two MnmG subunits. The cofactor is K(+).

Its subcellular location is the cytoplasm. Its function is as follows. Exhibits a very high intrinsic GTPase hydrolysis rate. Involved in the addition of a carboxymethylaminomethyl (cmnm) group at the wobble position (U34) of certain tRNAs, forming tRNA-cmnm(5)s(2)U34. The polypeptide is tRNA modification GTPase MnmE (Flavobacterium psychrophilum (strain ATCC 49511 / DSM 21280 / CIP 103535 / JIP02/86)).